A 483-amino-acid chain; its full sequence is tRNA (guanine(37)-N(1))-methyltransferase (483 aa).

The disordered stretch occupies residues 1 to 24; sequence MEEAATLQSLSISSSSPFPNNSSP. The span at 9–24 shows a compositional bias: low complexity; it reads SLSISSSSPFPNNSSP. Residues H252, 290-291, and N379 contribute to the S-adenosyl-L-methionine site; that span reads DL.

This sequence belongs to the class I-like SAM-binding methyltransferase superfamily. TRM5/TYW2 family. As to quaternary structure, monomer.

It localises to the mitochondrion matrix. It is found in the nucleus. The protein localises to the cytoplasm. The enzyme catalyses guanosine(37) in tRNA + S-adenosyl-L-methionine = N(1)-methylguanosine(37) in tRNA + S-adenosyl-L-homocysteine + H(+). Its function is as follows. Specifically methylates the N1 position of guanosine-37 in various cytoplasmic and mitochondrial tRNAs. Methylation is not dependent on the nature of the nucleoside 5' of the target nucleoside. This is the first step in the biosynthesis of wybutosine (yW), a modified base adjacent to the anticodon of tRNAs and required for accurate decoding. This chain is tRNA (guanine(37)-N(1))-methyltransferase, found in Ajellomyces capsulatus (strain G186AR / H82 / ATCC MYA-2454 / RMSCC 2432) (Darling's disease fungus).